The chain runs to 391 residues: S-adenosylmethionine synthase (391 aa).

The disordered stretch occupies residues 1-20; it reads MPRSDYLFTSESVSEGHPDK. Position 17 (His-17) interacts with ATP. Asp-19 lines the Mg(2+) pocket. Glu-45 serves as a coordination point for K(+). Glu-58 and Gln-102 together coordinate L-methionine. The interval 102 to 112 is flexible loop; sequence QSADIAQGVDA. ATP-binding positions include 169–171, 235–236, Asp-244, 250–251, Ala-267, and Lys-271; these read DAK, KF, and RK. Residue Asp-244 participates in L-methionine binding. Lys-275 is an L-methionine binding site.

This sequence belongs to the AdoMet synthase family. Homotetramer; dimer of dimers. It depends on Mg(2+) as a cofactor. The cofactor is K(+).

The protein resides in the cytoplasm. The catalysed reaction is L-methionine + ATP + H2O = S-adenosyl-L-methionine + phosphate + diphosphate. Its pathway is amino-acid biosynthesis; S-adenosyl-L-methionine biosynthesis; S-adenosyl-L-methionine from L-methionine: step 1/1. Catalyzes the formation of S-adenosylmethionine (AdoMet) from methionine and ATP. The overall synthetic reaction is composed of two sequential steps, AdoMet formation and the subsequent tripolyphosphate hydrolysis which occurs prior to release of AdoMet from the enzyme. The chain is S-adenosylmethionine synthase from Methylorubrum populi (strain ATCC BAA-705 / NCIMB 13946 / BJ001) (Methylobacterium populi).